The chain runs to 378 residues: Geraniol dehydrogenase (378 aa).

Zn(2+) contacts are provided by Cys-48, His-75, Cys-105, Cys-108, Cys-111, Cys-119, and Cys-179.

This sequence belongs to the zinc-containing alcohol dehydrogenase family. Monomer. The cofactor is Zn(2+).

It carries out the reaction (2E)-geraniol + NAD(+) = (2E)-geranial + NADH + H(+). It catalyses the reaction (2E,6E)-farnesol + NAD(+) = (2E,6E)-farnesal + NADH + H(+). In terms of biological role, catalyzes the NAD(+)-dependent oxidation of geraniol to geranial, playing an important role in the biosynthesis of neral, an alarm pheromone. Cannot use NADP(+). Also acts as a farnesol dehydrogenase by catalyzing the oxidation of (2E,6E)-farnesol to (2E,6E)-farnesal, with lower activity compared to geraniol dehydrogenase activity. This Carpoglyphus lactis (Dried fruit mite) protein is Geraniol dehydrogenase.